A 156-amino-acid chain; its full sequence is Ribosomal RNA large subunit methyltransferase H (156 aa).

S-adenosyl-L-methionine is bound by residues L73, G104, and 123–128 (ISSMTL).

This sequence belongs to the RNA methyltransferase RlmH family. As to quaternary structure, homodimer.

Its subcellular location is the cytoplasm. It carries out the reaction pseudouridine(1915) in 23S rRNA + S-adenosyl-L-methionine = N(3)-methylpseudouridine(1915) in 23S rRNA + S-adenosyl-L-homocysteine + H(+). Functionally, specifically methylates the pseudouridine at position 1915 (m3Psi1915) in 23S rRNA. The sequence is that of Ribosomal RNA large subunit methyltransferase H from Burkholderia cenocepacia (strain ATCC BAA-245 / DSM 16553 / LMG 16656 / NCTC 13227 / J2315 / CF5610) (Burkholderia cepacia (strain J2315)).